The sequence spans 1209 residues: Sterol 3-beta-glucosyltransferase (1209 aa).

The region spanning 167-217 is the GRAM 1 domain; the sequence is ERLIKKFLPNDDEKYIEEYPCWLLRDIMIQGHAYLTNKHLFFFAFIPNFES. The region spanning 218–315 is the PH domain; it reads DFNVTGSLRL…WVSSIKKQMF (98 aa). The region spanning 568-634 is the GRAM 2 domain; sequence VRFRQHFSFD…EDVENCYKET (67 aa). UDP-alpha-D-glucose-binding residues include serine 745, arginine 746, aspartate 748, asparagine 1019, valine 1048, histidine 1050, histidine 1063, serine 1066, glycine 1067, threonine 1068, aspartate 1087, and glutamine 1088. The disordered stretch occupies residues 1186-1209; sequence AKGNEKEEYSSEGSGSNDGSWLLI. Low complexity predominate over residues 1196 to 1209; sequence SEGSGSNDGSWLLI.

It belongs to the glycosyltransferase 28 family.

It localises to the cytoplasm. The protein resides in the membrane. The enzyme catalyses a sterol + UDP-alpha-D-glucose = a sterol 3-beta-D-glucoside + UDP + H(+). It catalyses the reaction ergosterol + UDP-alpha-D-glucose = ergosteryl 3-beta-D-glucoside + UDP + H(+). Sterol glycosyltransferase responsible for the glycosylation of ergosterol to form ergosterol-glucoside. The chain is Sterol 3-beta-glucosyltransferase from Kluyveromyces lactis (strain ATCC 8585 / CBS 2359 / DSM 70799 / NBRC 1267 / NRRL Y-1140 / WM37) (Yeast).